A 234-amino-acid polypeptide reads, in one-letter code: Ubiquitin domain-containing protein 1 (234 aa).

The segment at 1 to 47 (MGGCVGTHHDSSGSLNENSDGTGVALGRNQPLKKDKPKWKSDYPMTD) is disordered. A compositionally biased stretch (polar residues) spans 12–21 (SGSLNENSDG). Over residues 32–41 (LKKDKPKWKS) the composition is skewed to basic and acidic residues. The Ubiquitin-like domain maps to 152–227 (CQLRLRLSTG…VQVIVSQPIP (76 aa)).

In terms of biological role, may be involved in the regulation of cellular senescence through a positive feedback loop with TP53. The sequence is that of Ubiquitin domain-containing protein 1 (ubtd1) from Xenopus laevis (African clawed frog).